Reading from the N-terminus, the 105-residue chain is Large ribosomal subunit protein uL23 (105 aa).

This sequence belongs to the universal ribosomal protein uL23 family. As to quaternary structure, part of the 50S ribosomal subunit. Contacts protein L29, and trigger factor when it is bound to the ribosome.

In terms of biological role, one of the early assembly proteins it binds 23S rRNA. One of the proteins that surrounds the polypeptide exit tunnel on the outside of the ribosome. Forms the main docking site for trigger factor binding to the ribosome. This is Large ribosomal subunit protein uL23 from Janthinobacterium sp. (strain Marseille) (Minibacterium massiliensis).